Consider the following 201-residue polypeptide: Ribonuclease HII (201 aa).

The RNase H type-2 domain maps to 15–201; sequence QRVAGVDEVG…FRPVRRFLEA (187 aa). The a divalent metal cation site is built by Asp21, Glu22, and Asp113.

Belongs to the RNase HII family. Mn(2+) serves as cofactor. The cofactor is Mg(2+).

It is found in the cytoplasm. The catalysed reaction is Endonucleolytic cleavage to 5'-phosphomonoester.. In terms of biological role, endonuclease that specifically degrades the RNA of RNA-DNA hybrids. This chain is Ribonuclease HII, found in Nitrosococcus oceani (strain ATCC 19707 / BCRC 17464 / JCM 30415 / NCIMB 11848 / C-107).